The chain runs to 186 residues: Probable GPI-anchored cupredoxin ARB_05732-1 (186 aa).

Positions 1–18 (MVNMNILTTVALAGLAAA) are cleaved as a signal peptide. H55 contacts Cu cation. An intrachain disulfide couples C66 to C104. N87 is a glycosylation site (N-linked (GlcNAc...) asparagine). Residues C98 and H103 each contribute to the Cu cation site. The interval 130–160 (GAGNGQAPSRVNNGSSGSGTPTSGGAPAATS) is disordered. N-linked (GlcNAc...) asparagine glycosylation occurs at N142. A compositionally biased stretch (low complexity) spans 143 to 160 (GSSGSGTPTSGGAPAATS). Residue G153 is the site of GPI-anchor amidated glycine attachment. Residues 154–186 (GAPAATSPNAASSLTFSGAAALVAMGGAWIGLL) constitute a propeptide, removed in mature form.

Belongs to the multicopper oxidase family. Cu cation serves as cofactor.

It localises to the cell membrane. Its subcellular location is the secreted. Functionally, probable electron transfer copper protein that serves as a direct electron donor. This chain is Probable GPI-anchored cupredoxin ARB_05732-1, found in Arthroderma benhamiae (strain ATCC MYA-4681 / CBS 112371) (Trichophyton mentagrophytes).